The sequence spans 392 residues: Chorismate synthase (392 aa).

Arg40 and Arg46 together coordinate NADP(+). Residues 135–137 (RAS), 256–257 (QA), Gly300, 315–319 (KPISS), and Arg341 each bind FMN.

Belongs to the chorismate synthase family. In terms of assembly, homotetramer. It depends on FMNH2 as a cofactor.

The catalysed reaction is 5-O-(1-carboxyvinyl)-3-phosphoshikimate = chorismate + phosphate. It participates in metabolic intermediate biosynthesis; chorismate biosynthesis; chorismate from D-erythrose 4-phosphate and phosphoenolpyruvate: step 7/7. In terms of biological role, catalyzes the anti-1,4-elimination of the C-3 phosphate and the C-6 proR hydrogen from 5-enolpyruvylshikimate-3-phosphate (EPSP) to yield chorismate, which is the branch point compound that serves as the starting substrate for the three terminal pathways of aromatic amino acid biosynthesis. This reaction introduces a second double bond into the aromatic ring system. This Salinispora tropica (strain ATCC BAA-916 / DSM 44818 / JCM 13857 / NBRC 105044 / CNB-440) protein is Chorismate synthase.